Consider the following 244-residue polypeptide: UDP-2,3-diacylglucosamine hydrolase (244 aa).

Residues aspartate 8, histidine 10, aspartate 41, asparagine 79, and histidine 114 each contribute to the Mn(2+) site. Residue 79-80 (NR) participates in substrate binding. Residues aspartate 122, serine 160, asparagine 164, lysine 167, and histidine 195 each contribute to the substrate site. Residues histidine 195 and histidine 197 each coordinate Mn(2+).

It belongs to the LpxH family. Mn(2+) serves as cofactor.

It is found in the cell inner membrane. It carries out the reaction UDP-2-N,3-O-bis[(3R)-3-hydroxytetradecanoyl]-alpha-D-glucosamine + H2O = 2-N,3-O-bis[(3R)-3-hydroxytetradecanoyl]-alpha-D-glucosaminyl 1-phosphate + UMP + 2 H(+). It participates in glycolipid biosynthesis; lipid IV(A) biosynthesis; lipid IV(A) from (3R)-3-hydroxytetradecanoyl-[acyl-carrier-protein] and UDP-N-acetyl-alpha-D-glucosamine: step 4/6. In terms of biological role, hydrolyzes the pyrophosphate bond of UDP-2,3-diacylglucosamine to yield 2,3-diacylglucosamine 1-phosphate (lipid X) and UMP by catalyzing the attack of water at the alpha-P atom. Involved in the biosynthesis of lipid A, a phosphorylated glycolipid that anchors the lipopolysaccharide to the outer membrane of the cell. This is UDP-2,3-diacylglucosamine hydrolase from Hahella chejuensis (strain KCTC 2396).